The chain runs to 202 residues: Nucleoside triphosphate pyrophosphatase (202 aa).

Catalysis depends on Asp79, which acts as the Proton acceptor.

It belongs to the Maf family. A divalent metal cation serves as cofactor.

It localises to the cytoplasm. The catalysed reaction is a ribonucleoside 5'-triphosphate + H2O = a ribonucleoside 5'-phosphate + diphosphate + H(+). The enzyme catalyses a 2'-deoxyribonucleoside 5'-triphosphate + H2O = a 2'-deoxyribonucleoside 5'-phosphate + diphosphate + H(+). Nucleoside triphosphate pyrophosphatase. May have a dual role in cell division arrest and in preventing the incorporation of modified nucleotides into cellular nucleic acids. This is Nucleoside triphosphate pyrophosphatase from Rhodopseudomonas palustris (strain BisB5).